We begin with the raw amino-acid sequence, 140 residues long: ATP synthase epsilon chain (140 aa).

It belongs to the ATPase epsilon chain family. As to quaternary structure, F-type ATPases have 2 components, CF(1) - the catalytic core - and CF(0) - the membrane proton channel. CF(1) has five subunits: alpha(3), beta(3), gamma(1), delta(1), epsilon(1). CF(0) has three main subunits: a, b and c.

It localises to the cell inner membrane. Its function is as follows. Produces ATP from ADP in the presence of a proton gradient across the membrane. The protein is ATP synthase epsilon chain of Laribacter hongkongensis (strain HLHK9).